The sequence spans 396 residues: Tryptophan synthase beta chain (396 aa).

K90 bears the N6-(pyridoxal phosphate)lysine mark.

This sequence belongs to the TrpB family. As to quaternary structure, tetramer of two alpha and two beta chains. Pyridoxal 5'-phosphate is required as a cofactor.

It catalyses the reaction (1S,2R)-1-C-(indol-3-yl)glycerol 3-phosphate + L-serine = D-glyceraldehyde 3-phosphate + L-tryptophan + H2O. It functions in the pathway amino-acid biosynthesis; L-tryptophan biosynthesis; L-tryptophan from chorismate: step 5/5. Functionally, the beta subunit is responsible for the synthesis of L-tryptophan from indole and L-serine. The protein is Tryptophan synthase beta chain of Clostridium kluyveri (strain NBRC 12016).